Here is a 249-residue protein sequence, read N- to C-terminus: tRNA (guanine-N(1)-)-methyltransferase (249 aa).

Residues glycine 113 and 133–138 (IGDFVV) each bind S-adenosyl-L-methionine.

Belongs to the RNA methyltransferase TrmD family. In terms of assembly, homodimer.

The protein resides in the cytoplasm. The enzyme catalyses guanosine(37) in tRNA + S-adenosyl-L-methionine = N(1)-methylguanosine(37) in tRNA + S-adenosyl-L-homocysteine + H(+). Specifically methylates guanosine-37 in various tRNAs. In Neisseria meningitidis serogroup C (strain 053442), this protein is tRNA (guanine-N(1)-)-methyltransferase.